The following is a 324-amino-acid chain: Integrin-binding sialoprotein (324 aa).

An N-terminal signal peptide occupies residues 1–16; it reads MKTALILLSILGMACA. Phosphoserine occurs at positions 31, 67, 75, 76, and 95. Disordered stretches follow at residues 60–228 and 243–263; these read VQGG…GREL and QQTT…RKSS. A compositionally biased stretch (acidic residues) spans 66 to 105; it reads SSEENGDGDSSEEEGEEEETSNEEENNEDSEGNEDQEAEA. Positions 106-130 are enriched in polar residues; it reads ENSTLSTLSGVTASYGAETTPQAQT. Residue N107 is glycosylated (N-linked (GlcNAc...) asparagine). Positions 141-154 are enriched in basic and acidic residues; the sequence is KAGDAESRAPKVKE. Position 155 is a phosphoserine (S155). The segment covering 155 to 179 has biased composition (acidic residues); sequence SDEEEEEEEEEEENENEEAEVDENE. N-linked (GlcNAc...) asparagine glycans are attached at residues N183, N188, and N196. A compositionally biased stretch (acidic residues) spans 203–213; the sequence is NGEEAEAEEAS. Over residues 253-263 the composition is skewed to polar residues; it reads GTTSPPIRKSS. The short motif at 293-295 is the Integrin-binding motif element; it reads RGD. Sulfotyrosine is present on residues Y320 and Y321.

As to quaternary structure, monomer. Interacts with integrins; the interaction promotes cell adhesion.

Its subcellular location is the secreted. Its function is as follows. Binds tightly to hydroxyapatite. Appears to form an integral part of the mineralized matrix. Probably important to cell-matrix interaction. Promotes adhesion and migration of various cells via the alpha-V/beta-3 integrin receptor (ITGAV:ITGB3). In Mus musculus (Mouse), this protein is Integrin-binding sialoprotein (Ibsp).